Consider the following 338-residue polypeptide: Phytanoyl-CoA dioxygenase, peroxisomal (338 aa).

Residues 1 to 30 constitute a peroxisome transit peptide; the sequence is MEQLRAAARLQIVLGHLGRPSAGAVVAHPT. Residues Lys59 and Lys108 each carry the N6-succinyllysine modification. 2-oxoglutarate contacts are provided by residues Lys120, Met157, 175–177, and Trp193; that span reads HQD. Fe cation-binding residues include His175 and Asp177. Lys231 and Lys252 each carry N6-succinyllysine. Residue His264 coordinates Fe cation. 2 residues coordinate 2-oxoglutarate: Ser266 and Arg275. Ser317 is modified (phosphoserine).

The protein belongs to the PhyH family. Interacts with FKBP52. Interacts with PHYHIP. Requires Fe cation as cofactor. It depends on L-ascorbate as a cofactor. ATP serves as cofactor. The cofactor is Mg(2+). Expressed in liver, kidney, and T-cells, but not in spleen, brain, heart, lung and skeletal muscle.

The protein localises to the peroxisome. The enzyme catalyses phytanoyl-CoA + 2-oxoglutarate + O2 = 2-hydroxyphytanoyl-CoA + succinate + CO2. The catalysed reaction is 3-methylhexadecanoyl-CoA + 2-oxoglutarate + O2 = 2-hydroxy-3-methylhexadecanoyl-CoA + succinate + CO2. It catalyses the reaction hexadecanoyl-CoA + 2-oxoglutarate + O2 = 2-hydroxyhexadecanoyl-CoA + succinate + CO2. It carries out the reaction octanoyl-CoA + 2-oxoglutarate + O2 = 2-hydroxyoctanoyl-CoA + succinate + CO2. The enzyme catalyses decanoyl-CoA + 2-oxoglutarate + O2 = 2-hydroxydecanoyl-CoA + succinate + CO2. The catalysed reaction is 3-methylbutanoyl-CoA + 2-oxoglutarate + O2 = 2-hydroxy-3-methylbutanoyl-CoA + succinate + CO2. It catalyses the reaction heptadecanoyl-CoA + 2-oxoglutarate + O2 = 2-hydroxyheptadecanoyl-CoA + succinate + CO2. It carries out the reaction eicosanoyl-CoA + 2-oxoglutarate + O2 = 2-hydroxyeicosanoyl-CoA + succinate + CO2. The enzyme catalyses octadecanoyl-CoA + 2-oxoglutarate + O2 = 2-hydroxyoctadecanoyl-CoA + succinate + CO2. The catalysed reaction is dodecanoyl-CoA + 2-oxoglutarate + O2 = 2-hydroxydodecanoyl-CoA + succinate + CO2. It catalyses the reaction tetradecanoyl-CoA + 2-oxoglutarate + O2 = 2-hydroxytetradecanoyl-CoA + succinate + CO2. It carries out the reaction hexanoyl-CoA + 2-oxoglutarate + O2 = 2-hydroxyhexanoyl-CoA + succinate + CO2. The enzyme catalyses butanoyl-CoA + 2-oxoglutarate + O2 = 2-hydroxybutanoyl-CoA + succinate + CO2. The catalysed reaction is 3-methylnonanoyl-CoA + 2-oxoglutarate + O2 = 2-hydroxy-3-methylnonanoyl-CoA + succinate + CO2. It catalyses the reaction 3-methylundecanoyl-CoA + 2-oxoglutarate + O2 = 2-hydroxy-3-methylundecanoyl-CoA + succinate + CO2. It carries out the reaction 3-methyldodecanoyl-CoA + 2-oxoglutarate + O2 = 2-hydroxy-3-methyldodecanoyl-CoA + succinate + CO2. Its pathway is lipid metabolism; fatty acid metabolism. Its function is as follows. Catalyzes the 2-hydroxylation of not only racemic phytanoyl-CoA and the isomers of 3-methylhexadecanoyl-CoA, but also a variety of other mono-branched 3-methylacyl-CoA esters (with a chain length of at least seven carbon atoms) and straight-chain acyl-CoA esters (with a chain length longer than four carbon atoms). Does not hydroxylate long and very long straight chain acyl-CoAs or 2-methyl- and 4-methyl-branched acyl-CoAs. In Homo sapiens (Human), this protein is Phytanoyl-CoA dioxygenase, peroxisomal (PHYH).